A 203-amino-acid chain; its full sequence is Glycerol-3-phosphate acyltransferase (203 aa).

4 helical membrane passes run 4-24, 80-100, 117-137, and 139-159; these read MAVT…AVLI, PVLL…PLFF, PIGL…AILF, and YSSL…WMIK.

Belongs to the PlsY family. Probably interacts with PlsX.

It is found in the cell inner membrane. It catalyses the reaction an acyl phosphate + sn-glycerol 3-phosphate = a 1-acyl-sn-glycero-3-phosphate + phosphate. The protein operates within lipid metabolism; phospholipid metabolism. Catalyzes the transfer of an acyl group from acyl-phosphate (acyl-PO(4)) to glycerol-3-phosphate (G3P) to form lysophosphatidic acid (LPA). This enzyme utilizes acyl-phosphate as fatty acyl donor, but not acyl-CoA or acyl-ACP. The polypeptide is Glycerol-3-phosphate acyltransferase (Vibrio vulnificus (strain YJ016)).